A 201-amino-acid polypeptide reads, in one-letter code: Small ribosomal subunit protein uS4 (201 aa).

An S4 RNA-binding domain is found at 91-157 (SRLDNVVYRA…VPFQIARETA (67 aa)).

It belongs to the universal ribosomal protein uS4 family. In terms of assembly, part of the 30S ribosomal subunit. Contacts protein S5. The interaction surface between S4 and S5 is involved in control of translational fidelity.

Its function is as follows. One of the primary rRNA binding proteins, it binds directly to 16S rRNA where it nucleates assembly of the body of the 30S subunit. With S5 and S12 plays an important role in translational accuracy. This chain is Small ribosomal subunit protein uS4, found in Mycolicibacterium paratuberculosis (strain ATCC BAA-968 / K-10) (Mycobacterium paratuberculosis).